The sequence spans 195 residues: Nucleoside-triphosphatase THEP1 (195 aa).

ATP is bound by residues 11–18 (GRPGSGKS) and 103–110 (VVVIDEIG).

It belongs to the THEP1 NTPase family.

It carries out the reaction a ribonucleoside 5'-triphosphate + H2O = a ribonucleoside 5'-diphosphate + phosphate + H(+). Its function is as follows. Has nucleotide phosphatase activity towards ATP, GTP, CTP, TTP and UTP. May hydrolyze nucleoside diphosphates with lower efficiency. This Korarchaeum cryptofilum (strain OPF8) protein is Nucleoside-triphosphatase THEP1.